The primary structure comprises 350 residues: tRNA uridine(34) hydroxylase (350 aa).

The region spanning 146–240 is the Rhodanese domain; sequence DDPDALFIDM…YARKAREQGL (95 aa). Cysteine 200 acts as the Cysteine persulfide intermediate in catalysis.

This sequence belongs to the TrhO family.

It carries out the reaction uridine(34) in tRNA + AH2 + O2 = 5-hydroxyuridine(34) in tRNA + A + H2O. Catalyzes oxygen-dependent 5-hydroxyuridine (ho5U) modification at position 34 in tRNAs. The polypeptide is tRNA uridine(34) hydroxylase (Escherichia fergusonii (strain ATCC 35469 / DSM 13698 / CCUG 18766 / IAM 14443 / JCM 21226 / LMG 7866 / NBRC 102419 / NCTC 12128 / CDC 0568-73)).